Consider the following 690-residue polypeptide: Elongation factor G (690 aa).

In terms of domain architecture, tr-type G spans 8 to 283 (EKYRNIGIMA…AVVDYLPSPL (276 aa)). Residues 17-24 (AHIDAGKT), 81-85 (DTPGH), and 135-138 (NKLD) each bind GTP.

The protein belongs to the TRAFAC class translation factor GTPase superfamily. Classic translation factor GTPase family. EF-G/EF-2 subfamily.

It localises to the cytoplasm. In terms of biological role, catalyzes the GTP-dependent ribosomal translocation step during translation elongation. During this step, the ribosome changes from the pre-translocational (PRE) to the post-translocational (POST) state as the newly formed A-site-bound peptidyl-tRNA and P-site-bound deacylated tRNA move to the P and E sites, respectively. Catalyzes the coordinated movement of the two tRNA molecules, the mRNA and conformational changes in the ribosome. This chain is Elongation factor G, found in Rhizorhabdus wittichii (strain DSM 6014 / CCUG 31198 / JCM 15750 / NBRC 105917 / EY 4224 / RW1) (Sphingomonas wittichii).